We begin with the raw amino-acid sequence, 489 residues long: NADH-quinone oxidoreductase subunit N (489 aa).

The next 14 helical transmembrane spans lie at 15 to 35 (APLL…VFFI), 44 to 64 (GYLA…LWGV), 78 to 98 (FALT…TMSL), 106 to 126 (IEQG…ILLA), 131 to 151 (LIVL…LTGF), 166 to 186 (LVLG…IFGA), 209 to 229 (LTLL…KVAL), 244 to 264 (PTPV…AALV), 278 to 298 (WLPV…LGAV), 306 to 326 (MLAY…MVAG), 333 to 353 (AFLF…AVLI), 378 to 398 (LAVA…MAGF), 412 to 432 (GLPW…FFYL), and 459 to 479 (IALA…VFAL).

It belongs to the complex I subunit 2 family. NDH-1 is composed of 14 different subunits. Subunits NuoA, H, J, K, L, M, N constitute the membrane sector of the complex.

The protein localises to the cell membrane. The catalysed reaction is a quinone + NADH + 5 H(+)(in) = a quinol + NAD(+) + 4 H(+)(out). Its function is as follows. NDH-1 shuttles electrons from NADH, via FMN and iron-sulfur (Fe-S) centers, to quinones in the respiratory chain. The immediate electron acceptor for the enzyme in this species is believed to be ubiquinone. Couples the redox reaction to proton translocation (for every two electrons transferred, four hydrogen ions are translocated across the cytoplasmic membrane), and thus conserves the redox energy in a proton gradient. In Chloroflexus aggregans (strain MD-66 / DSM 9485), this protein is NADH-quinone oxidoreductase subunit N.